The sequence spans 117 residues: Ig heavy chain V region 108A (117 aa).

A signal peptide spans 1 to 19 (MGWSWIFLFLLSGTAGVHS). Residues 20–117 (EVQLQQSGPE…EDSAVYYCAR (98 aa)) form the Ig-like domain.

In Mus musculus (Mouse), this protein is Ig heavy chain V region 108A (Igh-VJ558).